The primary structure comprises 100 residues: NADH-quinone oxidoreductase subunit K (100 aa).

3 helical membrane passes run 2–22 (ITLS…LIGI), 29–49 (IMLF…LAAI), and 63–83 (LFIV…LILW).

This sequence belongs to the complex I subunit 4L family. In terms of assembly, NDH-1 is composed of 14 different subunits. Subunits NuoA, H, J, K, L, M, N constitute the membrane sector of the complex.

It is found in the cell inner membrane. The enzyme catalyses a quinone + NADH + 5 H(+)(in) = a quinol + NAD(+) + 4 H(+)(out). In terms of biological role, NDH-1 shuttles electrons from NADH, via FMN and iron-sulfur (Fe-S) centers, to quinones in the respiratory chain. The immediate electron acceptor for the enzyme in this species is believed to be ubiquinone. Couples the redox reaction to proton translocation (for every two electrons transferred, four hydrogen ions are translocated across the cytoplasmic membrane), and thus conserves the redox energy in a proton gradient. The sequence is that of NADH-quinone oxidoreductase subunit K from Campylobacter curvus (strain 525.92).